Consider the following 708-residue polypeptide: Elongation factor G (708 aa).

In terms of domain architecture, tr-type G spans 8 to 290 (KRYRNIGISA…AVIQYLPAPM (283 aa)). Residues 17 to 24 (AHIDAGKT), 88 to 92 (DTPGH), and 142 to 145 (NKMD) each bind GTP.

Belongs to the TRAFAC class translation factor GTPase superfamily. Classic translation factor GTPase family. EF-G/EF-2 subfamily.

The protein localises to the cytoplasm. Catalyzes the GTP-dependent ribosomal translocation step during translation elongation. During this step, the ribosome changes from the pre-translocational (PRE) to the post-translocational (POST) state as the newly formed A-site-bound peptidyl-tRNA and P-site-bound deacylated tRNA move to the P and E sites, respectively. Catalyzes the coordinated movement of the two tRNA molecules, the mRNA and conformational changes in the ribosome. The chain is Elongation factor G from Psychrobacter cryohalolentis (strain ATCC BAA-1226 / DSM 17306 / VKM B-2378 / K5).